The primary structure comprises 100 residues: Large ribosomal subunit protein bL21 (100 aa).

The protein belongs to the bacterial ribosomal protein bL21 family. In terms of assembly, part of the 50S ribosomal subunit. Contacts protein L20.

In terms of biological role, this protein binds to 23S rRNA in the presence of protein L20. This Ureaplasma urealyticum serovar 10 (strain ATCC 33699 / Western) protein is Large ribosomal subunit protein bL21.